The primary structure comprises 482 residues: Ubiquitin carboxyl-terminal hydrolase 6 (482 aa).

In terms of domain architecture, Ubiquitin-like spans 2–77 (PTVSVKWQKK…LMMMGTADEI (76 aa)). The 375-residue stretch at 104–478 (AGLVNLGNTC…MAYITMYKAR (375 aa)) folds into the USP domain. Cys-113 (nucleophile) is an active-site residue. The calmodulin-binding stretch occupies residues 172 to 191 (SQFWMVLRKKYPQFSQLQNG). 2 stretches are compositionally biased toward basic and acidic residues: residues 350-361 (PRQKLREEEGKK) and 371-381 (GSKDSDVKMTD). Residues 350–407 (PRQKLREEEGKKLGLQTSAKSGSKDSDVKMTDAEASANGSGESSTVNPQEGTSSEKET) form a disordered region. Low complexity predominate over residues 382-393 (AEASANGSGESS). His-430 serves as the catalytic Proton acceptor.

It belongs to the peptidase C19 family. Interacts with calmodulin (CaM).

It carries out the reaction Thiol-dependent hydrolysis of ester, thioester, amide, peptide and isopeptide bonds formed by the C-terminal Gly of ubiquitin (a 76-residue protein attached to proteins as an intracellular targeting signal).. Functionally, recognizes and hydrolyzes the peptide bond at the C-terminal Gly of ubiquitin. Involved in the processing of poly-ubiquitin precursors as well as that of ubiquitinated proteins. This chain is Ubiquitin carboxyl-terminal hydrolase 6 (UBP6), found in Arabidopsis thaliana (Mouse-ear cress).